Reading from the N-terminus, the 714-residue chain is ATP-dependent RNA helicase MSS116, mitochondrial (714 aa).

The transit peptide at 1 to 37 (MSWVRSVAIRTALCRQVRSRYQSYGSTRLFSSSLRSW) directs the protein to the mitochondrion. The Q motif motif lies at 74–102 (SLEASRKFDKSIFRGLYNSKMKNMTVVQQ). Residues 106 to 296 (MPMMDTKTGV…HETIGKEYEY (191 aa)) enclose the Helicase ATP-binding domain. 119–126 (AKTGTGKT) is a binding site for ATP. The short motif at 234–237 (DEAD) is the DEAD box element. The 164-residue stretch at 335-498 (HINDKYFKAI…TSPDHFQRLG (164 aa)) folds into the Helicase C-terminal domain. The segment at 581–714 (SSNDRKSKRT…TYGRRDDSDE (134 aa)) is disordered. Composition is skewed to basic and acidic residues over residues 619 to 640 (RSFD…DRKS), 656 to 671 (YGDK…DKSY), and 679 to 697 (SNDR…EKRN).

It belongs to the DEAD box helicase family. DDX18/HAS1 subfamily.

Its subcellular location is the mitochondrion matrix. It catalyses the reaction ATP + H2O = ADP + phosphate + H(+). ATP-dependent RNA helicase required for mitochondrial splicing of group I and II introns. Also required for efficient mitochondrial translation. In Meyerozyma guilliermondii (strain ATCC 6260 / CBS 566 / DSM 6381 / JCM 1539 / NBRC 10279 / NRRL Y-324) (Yeast), this protein is ATP-dependent RNA helicase MSS116, mitochondrial (MSS116).